The primary structure comprises 207 residues: Urease accessory protein UreG (207 aa).

12 to 19 (GPVGAGKT) contacts GTP.

Belongs to the SIMIBI class G3E GTPase family. UreG subfamily. As to quaternary structure, homodimer. UreD, UreF and UreG form a complex that acts as a GTP-hydrolysis-dependent molecular chaperone, activating the urease apoprotein by helping to assemble the nickel containing metallocenter of UreC. The UreE protein probably delivers the nickel.

The protein resides in the cytoplasm. Functionally, facilitates the functional incorporation of the urease nickel metallocenter. This process requires GTP hydrolysis, probably effectuated by UreG. This Cereibacter sphaeroides (strain ATCC 17025 / ATH 2.4.3) (Rhodobacter sphaeroides) protein is Urease accessory protein UreG.